The sequence spans 257 residues: uncharacterized protein (257 aa).

7-14 contributes to the ATP binding site; that stretch reads GKGGVGKT.

The protein to M.jannaschii MJ0084 and MJ0685.

This is an uncharacterized protein from Methanocaldococcus jannaschii (strain ATCC 43067 / DSM 2661 / JAL-1 / JCM 10045 / NBRC 100440) (Methanococcus jannaschii).